The chain runs to 311 residues: Thioredoxin reductase (311 aa).

FAD is bound by residues 31-39 (FEKGMPGGQ) and 32-39 (EKGMPGGQ). The cysteines at positions 133 and 136 are disulfide-linked. 281–290 (DIRIFAPKQV) contacts FAD.

This sequence belongs to the class-II pyridine nucleotide-disulfide oxidoreductase family. Homodimer. Requires FAD as cofactor.

The protein resides in the cytoplasm. The enzyme catalyses [thioredoxin]-dithiol + NADP(+) = [thioredoxin]-disulfide + NADPH + H(+). The chain is Thioredoxin reductase (trxB) from Helicobacter pylori (strain J99 / ATCC 700824) (Campylobacter pylori J99).